A 229-amino-acid polypeptide reads, in one-letter code: MNKYFKVFFFVLLTHALKSSLIFGQATLQKGLSLDIDKDSTATDRLVVKHLDSDKQGYKVYTFKKEGWEYVNVKHVYFGERLLRVGRDNDMRCDFVHYVKVFWKGDVAPFFIKMNYYNWAWVSTRLHFKLNPDLTWTEVTVLTLDENAEQGFTTLFKQKLDEFASQVGDDVLAKYKPFVDDPNKKRFDLKATDEKEETSKKKYVLMVVVVVVFVVVASLVVFLVKFCLK.

The signal sequence occupies residues M1–S19. The Extracellular portion of the chain corresponds to S20–Y203. A helical membrane pass occupies residues V204–V224. At K225 to K229 the chain is on the cytoplasmic side.

It is found in the membrane. The sequence is that of 23 kDa piroplasm membrane protein from Theileria annulata.